We begin with the raw amino-acid sequence, 470 residues long: MANTPSQQDQFANKAQAWSARFSEPVSDLVKRYTASVDFDKRLARHDIRGSLAHADMLAAQGIISAQDLADIERGMQQILSEIDAGSFQWLLDLEDVHLNIEKRLVELVGDAGKRLHTGRSRNDQVATDIRLWLRDEIDLLIDLLRQLRHALATVALDNAGTIMPGFTHLQVAQPVTFGHHLLAYAEMFGRDAERLADCRKRVNRLPLGAAALAGTSYPIDRERVASTLGFDGVCRNSLDAVSDRDFAIEFCAAASLIMTHVSRLSEELVLWMSPRVGFIDLADRFCTGSSIMPQKKNPDVPELARGKTGRVNGHLVALLTLMKGQPLAYNKDNQEDKEGLFDTADTLRDTLTIFADMAGGIKVKADNMRAAALQGFATATDLADYLVKRGLPFRDAHEVVAHAVRDCEQRGCDLADLSLAELQAYHPSIEADIHQVLTLEGSVAARKHTGGTAPERVREEAQRVIQETA.

Belongs to the lyase 1 family. Argininosuccinate lyase subfamily.

Its subcellular location is the cytoplasm. It carries out the reaction 2-(N(omega)-L-arginino)succinate = fumarate + L-arginine. Its pathway is amino-acid biosynthesis; L-arginine biosynthesis; L-arginine from L-ornithine and carbamoyl phosphate: step 3/3. This Bordetella avium (strain 197N) protein is Argininosuccinate lyase.